Here is a 362-residue protein sequence, read N- to C-terminus: Olfactory receptor 5AU1 (362 aa).

The Extracellular segment spans residues 1–79 (MTEFHLQSQM…TDPQLQRLLF (79 aa)). Asparagine 56 is a glycosylation site (N-linked (GlcNAc...) asparagine). A helical membrane pass occupies residues 80-100 (VVFLGMYTATLLGNLVMFLLI). The Cytoplasmic portion of the chain corresponds to 101-116 (HVSATLHTPMYSLLKS). A helical transmembrane segment spans residues 117–139 (LSFLDFCYSSTVVPQTLVNFLAK). The Extracellular portion of the chain corresponds to 140-150 (RKVISYFGCMT). Cysteine 148 and cysteine 230 form a disulfide bridge. The chain crosses the membrane as a helical span at residues 151–171 (QMFFYAGFATSECYLIAAMAY). Residues 172–194 (DRYAAICNPLLYSTIMSPEVCAS) are Cytoplasmic-facing. Residues 195 to 215 (LIVGSYSAGFLNSLIHTGCIF) form a helical membrane-spanning segment. Residues 216–247 (SLKFCGAHVVTHFFCDGPPILSLSCVDTSLCE) are Extracellular-facing. A helical membrane pass occupies residues 248–268 (ILLFIFAGFNLLSCTLTILIS). The Cytoplasmic portion of the chain corresponds to 269–290 (YFLILNTILKMSSAQGRFKAFS). A helical membrane pass occupies residues 291 to 311 (TCASHLTAICLFFGTTLFMYL). Topologically, residues 312 to 322 (RPRSSYSLTQD) are extracellular. Residues 323–343 (RTVAVIYTVVIPVLNPLMYSL) traverse the membrane as a helical segment. Over 344-362 (RNKDVKKALIKVWGRKTME) the chain is Cytoplasmic.

This sequence belongs to the G-protein coupled receptor 1 family.

It is found in the cell membrane. Functionally, odorant receptor. This is Olfactory receptor 5AU1 (OR5AU1) from Homo sapiens (Human).